A 306-amino-acid chain; its full sequence is D-alanine--D-alanine ligase B (306 aa).

Residues glutamate 15 and serine 150 contribute to the active site. Residues 101 to 303 (KLLWQGAGLP…FSQLVVRILE (203 aa)) form the ATP-grasp domain. 134 to 189 (ISALGLPVIVKPSREGSSVGMSKVVAENALQDALRLAFQHDEEVLIEKWLSGPEFT) contacts ATP. Positions 257, 270, and 272 each coordinate Mg(2+). Serine 281 is a catalytic residue.

The protein belongs to the D-alanine--D-alanine ligase family. As to quaternary structure, monomer. Mg(2+) is required as a cofactor. Requires Mn(2+) as cofactor.

The protein resides in the cytoplasm. The catalysed reaction is 2 D-alanine + ATP = D-alanyl-D-alanine + ADP + phosphate + H(+). The protein operates within cell wall biogenesis; peptidoglycan biosynthesis. Cell wall formation. The polypeptide is D-alanine--D-alanine ligase B (ddlB) (Escherichia coli (strain K12)).